The chain runs to 517 residues: Probable bifunctional methylthioribulose-1-phosphate dehydratase/enolase-phosphatase E1 (517 aa).

The interval 1–242 (MACSGCSCEA…CIKLYQLGID (242 aa)) is methylthioribulose-1-phosphate dehydratase. Cysteine 114 provides a ligand contact to substrate. Zn(2+) contacts are provided by histidine 132 and histidine 134. Glutamate 157 serves as the catalytic Proton donor/acceptor; for methylthioribulose-1-phosphate dehydratase activity. Histidine 207 provides a ligand contact to Zn(2+). The interval 278 to 517 (VVLDIEGTTT…FRTIKSFSEI (240 aa)) is enolase-phosphatase E1. Aspartate 281 and glutamate 283 together coordinate Mg(2+). Substrate-binding positions include 416–417 (SS) and lysine 450. Mg(2+) is bound at residue aspartate 476.

This sequence in the N-terminal section; belongs to the aldolase class II family. MtnB subfamily. The protein in the C-terminal section; belongs to the HAD-like hydrolase superfamily. MasA/MtnC family. Zn(2+) serves as cofactor. The cofactor is Mg(2+).

It carries out the reaction 5-(methylsulfanyl)-D-ribulose 1-phosphate = 5-methylsulfanyl-2,3-dioxopentyl phosphate + H2O. The catalysed reaction is 5-methylsulfanyl-2,3-dioxopentyl phosphate + H2O = 1,2-dihydroxy-5-(methylsulfanyl)pent-1-en-3-one + phosphate. Its pathway is amino-acid biosynthesis; L-methionine biosynthesis via salvage pathway; L-methionine from S-methyl-5-thio-alpha-D-ribose 1-phosphate: step 2/6. It participates in amino-acid biosynthesis; L-methionine biosynthesis via salvage pathway; L-methionine from S-methyl-5-thio-alpha-D-ribose 1-phosphate: step 3/6. It functions in the pathway amino-acid biosynthesis; L-methionine biosynthesis via salvage pathway; L-methionine from S-methyl-5-thio-alpha-D-ribose 1-phosphate: step 4/6. The polypeptide is Probable bifunctional methylthioribulose-1-phosphate dehydratase/enolase-phosphatase E1 (Zea mays (Maize)).